We begin with the raw amino-acid sequence, 255 residues long: Propionicin-F (255 aa).

2 consecutive propeptides follow at residues 1-101 and 145-255; these read MNTK…RVSC and GTPT…DETV.

Its subcellular location is the secreted. In terms of biological role, bacteriocin with specific antibacterial activity against strains of P.freudenreichii. No antibacterial activity was detected against P.acidipropionici, P.jensenii and P.thoenii. The chain is Propionicin-F from Propionibacterium freudenreichii subsp. freudenreichii.